Reading from the N-terminus, the 322-residue chain is Endochitinase CH25 (322 aa).

Positions 1–20 are cleaved as a signal peptide; the sequence is MKSCLLLFLIFSFLLSFSLA. One can recognise a Chitin-binding type-1 domain in the interval 21–62; the sequence is EQCGRQAGGALCPNGLCCSEFGWCGDTEAYCKQPGCQSQCGG. 7 disulfide bridges follow: C23/C38, C32/C44, C37/C51, C56/C60, C92/C154, C166/C174, and C273/C305. The Proton donor role is filled by E136.

This sequence belongs to the glycosyl hydrolase 19 family. Chitinase class I subfamily. High expression in roots, moderate in floral tissues and low in stems and leaves.

It carries out the reaction Random endo-hydrolysis of N-acetyl-beta-D-glucosaminide (1-&gt;4)-beta-linkages in chitin and chitodextrins.. In Brassica napus (Rape), this protein is Endochitinase CH25.